The chain runs to 715 residues: Integrator complex subunit 13 (715 aa).

Disordered regions lie at residues 572-612 (KPPE…SERI) and 626-659 (AEVI…SKGP). A Nuclear localization signal (NLS) motif is present at residues 581–591 (KRGRKREDKEE). The cleavage module binding motif (CMBM) stretch occupies residues 658-703 (GPMSLLSLWSSRINTANSRKHQEFVGRLNSVNNKAELYQHLKEENG).

This sequence belongs to the Integrator subunit 13 family. In terms of assembly, component of the Integrator complex, composed of core subunits INTS1, INTS2, INTS3, INTS4, INTS5, INTS6, INTS7, INTS8, INTS9/RC74, INTS10, INTS11/CPSF3L, INTS12, INTS13, INTS14 and INTS15. The core complex associates with protein phosphatase 2A subunits PPP2CA and PPP2R1A, to form the Integrator-PP2A (INTAC) complex. INTS13 is part of the tail subcomplex, composed of INTS10, INTS13, INTS14 and INTS15.

Its subcellular location is the nucleus. The protein resides in the cytoplasm. Its function is as follows. Component of the integrator complex, a multiprotein complex that terminates RNA polymerase II (Pol II) transcription in the promoter-proximal region of genes. The integrator complex provides a quality checkpoint during transcription elongation by driving premature transcription termination of transcripts that are unfavorably configured for transcriptional elongation: the complex terminates transcription by (1) catalyzing dephosphorylation of the C-terminal domain (CTD) of Pol II subunit POLR2A/RPB1 and SUPT5H/SPT5, (2) degrading the exiting nascent RNA transcript via endonuclease activity and (3) promoting the release of Pol II from bound DNA. The integrator complex is also involved in terminating the synthesis of non-coding Pol II transcripts, such as enhancer RNAs (eRNAs), small nuclear RNAs (snRNAs), telomerase RNAs and long non-coding RNAs (lncRNAs). Within the integrator complex, INTS13 is part of the integrator tail module and acts as a platform for the recruitment of transcription factors at promoters. Plays a role in gastrulation and early embryogenesis. This chain is Integrator complex subunit 13, found in Xenopus laevis (African clawed frog).